Here is a 341-residue protein sequence, read N- to C-terminus: Phosphate acyltransferase (341 aa).

It belongs to the PlsX family. As to quaternary structure, homodimer. Probably interacts with PlsY.

It localises to the cytoplasm. The enzyme catalyses a fatty acyl-[ACP] + phosphate = an acyl phosphate + holo-[ACP]. The protein operates within lipid metabolism; phospholipid metabolism. Its function is as follows. Catalyzes the reversible formation of acyl-phosphate (acyl-PO(4)) from acyl-[acyl-carrier-protein] (acyl-ACP). This enzyme utilizes acyl-ACP as fatty acyl donor, but not acyl-CoA. In Aliivibrio fischeri (strain ATCC 700601 / ES114) (Vibrio fischeri), this protein is Phosphate acyltransferase.